A 468-amino-acid chain; its full sequence is 5-carboxymethyl-2-hydroxymuconate semialdehyde dehydrogenase (468 aa).

E244 is a catalytic residue. Residue C278 is the Nucleophile of the active site.

It belongs to the aldehyde dehydrogenase family. Homodimer.

It carries out the reaction 2-hydroxy-5-carboxymethylmuconate semialdehyde + NAD(+) + H2O = (2E,4Z)-5-hydroxypenta-2,4-diene-1,2,5-tricarboxylate + NADH + 2 H(+). Its pathway is aromatic compound metabolism; 4-hydroxyphenylacetate degradation; pyruvate and succinate semialdehyde from 4-hydroxyphenylacetate: step 3/7. In terms of biological role, catalyzes the conversion of 5-carboxymethyl-2-hydroxy-muconic semialdehyde (CHMS) into 5-carboxymethyl-2-hydroxy-muconic acid (CHM or (2E,4Z)-5-hydroxypenta-2,4-diene-1,2,5-tricarboxylate). Is involved in a meta-cleavage pathway for the catabolism of 4-hydroxyphenylacetate (4-HPA) via homoprotocatechuate (HPC or 3,4-dihydroxyphenylacetate). The protein is 5-carboxymethyl-2-hydroxymuconate semialdehyde dehydrogenase of Escherichia coli.